Reading from the N-terminus, the 206-residue chain is dCTP deaminase, dUMP-forming (206 aa).

DCTP is bound by residues 117 to 122 (RSSFGR), Asp-135, 143 to 145 (TLE), Gln-163, Tyr-177, Lys-184, and Gln-188. Glu-145 serves as the catalytic Proton donor/acceptor.

Belongs to the dCTP deaminase family. As to quaternary structure, homotrimer.

The enzyme catalyses dCTP + 2 H2O = dUMP + NH4(+) + diphosphate. Its pathway is pyrimidine metabolism; dUMP biosynthesis; dUMP from dCTP: step 1/1. In terms of biological role, bifunctional enzyme that catalyzes both the deamination of dCTP to dUTP and the hydrolysis of dUTP to dUMP without releasing the toxic dUTP intermediate. The chain is dCTP deaminase, dUMP-forming from Methanococcus maripaludis (strain DSM 14266 / JCM 13030 / NBRC 101832 / S2 / LL).